We begin with the raw amino-acid sequence, 526 residues long: D-arabinono-1,4-lactone oxidase (526 aa).

The 175-residue stretch at 19 to 193 (YSAKPERYFQ…VSATIRVVPG (175 aa)) folds into the FAD-binding PCMH-type domain. Residue His56 is modified to Pros-8alpha-FAD histidine.

Belongs to the oxygen-dependent FAD-linked oxidoreductase family. Monomer. The cofactor is FAD. In terms of processing, the N-terminus is blocked.

It localises to the mitochondrion membrane. The catalysed reaction is D-arabinono-1,4-lactone + O2 = dehydro-D-arabinono-1,4-lactone + H2O2 + H(+). It functions in the pathway cofactor biosynthesis; D-erythroascorbate biosynthesis; dehydro-D-arabinono-1,4-lactone from D-arabinose: step 2/2. Its function is as follows. Can oxidize L-gulono-1,4-lactone as well as D-arabinono-1,4-lactone and L-galactono-1,4-lactone. This Saccharomyces cerevisiae (strain ATCC 204508 / S288c) (Baker's yeast) protein is D-arabinono-1,4-lactone oxidase (ALO1).